The chain runs to 342 residues: ATP synthase subunit a (342 aa).

Transmembrane regions (helical) follow at residues 11–31 (GLIKVIALVVPFLLNVNAFAS), 109–129 (HVVTLWVVSAIVLIVFTIIGS), 170–190 (YLPYLLTVFMFVLLCNVLGLV), 199–219 (NINVTLTLATFTFVLTQIAAL), 238–258 (ALWIIMIPIEFIGLFTKPVAL), 262–282 (LFANMTAGHIVILSLIFISFI), 287–307 (IVAVAMSVPFSIFIYLLEIFV), and 308–328 (AFLQAYIFTMLSALFIGLASA).

It belongs to the ATPase A chain family. As to quaternary structure, F-type ATPases have 2 components, CF(1) - the catalytic core - and CF(0) - the membrane proton channel. CF(1) has five subunits: alpha(3), beta(3), gamma(1), delta(1), epsilon(1). CF(0) has four main subunits: a, b, b' and c.

The protein resides in the cell inner membrane. Functionally, key component of the proton channel; it plays a direct role in the translocation of protons across the membrane. This Chlorobium phaeobacteroides (strain DSM 266 / SMG 266 / 2430) protein is ATP synthase subunit a.